Consider the following 146-residue polypeptide: Large ribosomal subunit protein uL15 (146 aa).

Residues 1 to 10 (MTLKLHDLRP) are compositionally biased toward basic and acidic residues. Positions 1-41 (MTLKLHDLRPARGSKIARTRVGRGDGSKGKTAGRGTKGTRA) are disordered.

This sequence belongs to the universal ribosomal protein uL15 family. In terms of assembly, part of the 50S ribosomal subunit.

Its function is as follows. Binds to the 23S rRNA. The polypeptide is Large ribosomal subunit protein uL15 (Mycobacterium tuberculosis (strain ATCC 25177 / H37Ra)).